Reading from the N-terminus, the 474-residue chain is Aspartyl/glutamyl-tRNA(Asn/Gln) amidotransferase subunit B (474 aa).

Belongs to the GatB/GatE family. GatB subfamily. In terms of assembly, heterotrimer of A, B and C subunits.

It catalyses the reaction L-glutamyl-tRNA(Gln) + L-glutamine + ATP + H2O = L-glutaminyl-tRNA(Gln) + L-glutamate + ADP + phosphate + H(+). It carries out the reaction L-aspartyl-tRNA(Asn) + L-glutamine + ATP + H2O = L-asparaginyl-tRNA(Asn) + L-glutamate + ADP + phosphate + 2 H(+). Its function is as follows. Allows the formation of correctly charged Asn-tRNA(Asn) or Gln-tRNA(Gln) through the transamidation of misacylated Asp-tRNA(Asn) or Glu-tRNA(Gln) in organisms which lack either or both of asparaginyl-tRNA or glutaminyl-tRNA synthetases. The reaction takes place in the presence of glutamine and ATP through an activated phospho-Asp-tRNA(Asn) or phospho-Glu-tRNA(Gln). The protein is Aspartyl/glutamyl-tRNA(Asn/Gln) amidotransferase subunit B of Coprothermobacter proteolyticus (strain ATCC 35245 / DSM 5265 / OCM 4 / BT).